Reading from the N-terminus, the 121-residue chain is Small ribosomal subunit protein bS16 (121 aa).

Residues L97 to S114 are compositionally biased toward basic and acidic residues. Positions L97–S121 are disordered.

This sequence belongs to the bacterial ribosomal protein bS16 family.

The sequence is that of Small ribosomal subunit protein bS16 from Prochlorococcus marinus (strain AS9601).